Consider the following 886-residue polypeptide: MEPPTVPSERSLSLSLPGPREGQATLKPPPQHLWRQPRTPIRIQQRGYSDSAERAERERQPHRPIERADAMDTSDRPGLRTTRMSWPSSFHGTGTGSGGAGGGSSRRFEAENGPTPSPGRSPLDSQASPGLVLHAGAATSQRRESFLYRSDSDYDMSPKTMSRNSSVTSEAHAEDLIVTPFAQVLASLRSVRSNFSLLTNVPVPSNKRSPLGGPTPVCKATLSEETCQQLARETLEELDWCLEQLETMQTYRSVSEMASHKFKRMLNRELTHLSEMSRSGNQVSEYISTTFLDKQNEVEIPSPTMKEREKQQAPRPRPSQPPPPPVPHLQPMSQITGLKKLMHSNSLNNSNIPRFGVKTDQEELLAQELENLNKWGLNIFCVSDYAGGRSLTCIMYMIFQERDLLKKFRIPVDTMVTYMLTLEDHYHADVAYHNSLHAADVLQSTHVLLATPALDAVFTDLEILAALFAAAIHDVDHPGVSNQFLINTNSELALMYNDESVLENHHLAVGFKLLQEDNCDIFQNLSKRQRQSLRKMVIDMVLATDMSKHMTLLADLKTMVETKKVTSSGVLLLDNYSDRIQVLRNMVHCADLSNPTKPLELYRQWTDRIMAEFFQQGDRERERGMEISPMCDKHTASVEKSQVGFIDYIVHPLWETWADLVHPDAQEILDTLEDNRDWYYSAIRQSPSPPPEEESRGPGHPPLPDKFQFELTLEEEEEEEISMAQIPCTAQEALTAQGLSGVEEALDATIAWEASPAQESLEVMAQEASLEAELEAVYLTQQAQSTGSAPVAPDEFSSREEFVVAVSHSSPSALALQSPLLPAWRTLSVSEHAPGLPGLPSTAAEVEAQREHQAAKRACSACAGTFGEDTSALPAPGGGGSGGDPT.

A disordered region spans residues 1–128 (MEPPTVPSER…GRSPLDSQAS (128 aa)). Ser-13 bears the Phosphoserine mark. Residues 36–46 (QPRTPIRIQQR) are compositionally biased toward low complexity. Residues 51 to 78 (SAERAERERQPHRPIERADAMDTSDRPG) show a composition bias toward basic and acidic residues. Residues 93–104 (TGTGSGGAGGGS) are compositionally biased toward gly residues. A phosphoserine mark is found at Gly-119 and Leu-123. Residue Ser-152 is modified to Phosphoserine; by MAPKAPK2. 3 positions are modified to phosphoserine: Ser-157, Ser-165, and Ser-209. A disordered region spans residues 294–331 (KQNEVEIPSPTMKEREKQQAPRPRPSQPPPPPVPHLQP). Positions 315 to 328 (RPRPSQPPPPPVPH) are enriched in pro residues. Ser-346 bears the Phosphoserine mark. The 330-residue stretch at 357-686 (VKTDQEELLA…DWYYSAIRQS (330 aa)) folds into the PDEase domain. Lys-358 participates in a covalent cross-link: Glycyl lysine isopeptide (Lys-Gly) (interchain with G-Cter in SUMO). The Proton donor role is filled by His-433. His-433 lines the 3',5'-cyclic AMP pocket. Residues His-433 and His-437 each coordinate AMP. Zn(2+) is bound by residues His-437, His-473, Asp-474, and Asp-591. Asp-474, Asp-591, Gln-642, and Phe-645 together coordinate AMP. Residue Asp-474 coordinates Mg(2+). Residue Asp-474 coordinates Mn(2+). The 3',5'-cyclic AMP site is built by Gln-642 and Phe-645. Disordered stretches follow at residues 682-705 (AIRQ…PLPD) and 866-886 (FGED…GDPT). 2 positions are modified to phosphoserine: Ser-686 and Ser-688. The segment covering 876-886 (PGGGGSGGDPT) has biased composition (gly residues).

It belongs to the cyclic nucleotide phosphodiesterase family. PDE4 subfamily. In terms of assembly, interacts with LYN (via SH3 domain). Interacts with ARRB2. The cofactor is Zn(2+). It depends on Mg(2+) as a cofactor. Mn(2+) serves as cofactor. Proteolytically cleaved by CASP3. Post-translationally, phosphorylated at Ser-119 by PKA. Expressed in lymphoid cell subsets including CD8-positive T cells and T-helper 2 cells. Expressed in dendritic cells. In terms of tissue distribution, highly expressed in liver, stomach, testis, thyroid and adrenal glands and at a lower extent in placenta, kidney, pancreas, ovary, uterus and skin. Expressed in myeloid cell subsets including dendritic cells, monocytes, macrophages, eosinophils and mast cells. Expressed in natural killer cells. Expressed in bronchial smooth muscle. As to expression, expressed at high levels in the heart and small intestine. It is also found in the brain, kidney, spleen, colon, salivary gland, ovary and peripheral blood lymphocytes. Expressed predominantly in skeletal muscle and brain and at lower levels in the testis. Found in specific neuronal subpopulations including cortical pyramidal neurons, horn neurons in the spinal cord and Purkinje cells in cerebellum (at protein level).

The protein localises to the cytoplasm. It is found in the perinuclear region. Its subcellular location is the cell projection. The protein resides in the ruffle membrane. It localises to the cytosol. The protein localises to the membrane. The catalysed reaction is 3',5'-cyclic AMP + H2O = AMP + H(+). Its pathway is purine metabolism; 3',5'-cyclic AMP degradation; AMP from 3',5'-cyclic AMP: step 1/1. With respect to regulation, inhibited by rolipram, cilomilast, Ro 20-1724, roflumilast and denbufylline. Its activity is regulated as follows. Inhibited by rolipram. Inhibited by rolipram and cilomilast. Functionally, hydrolyzes the second messenger 3',5'-cyclic AMP (cAMP), which is a key regulator of many important physiological processes. In terms of biological role, efficiently hydrolyzes cAMP. Its function is as follows. Efficiently hydrolyzes cAMP. The phosphodiesterase activity is not affected by calcium, calmodulin or cyclic GMP (cGMP) levels. Does not hydrolyze cGMP. The chain is 3',5'-cyclic-AMP phosphodiesterase 4A (PDE4A) from Homo sapiens (Human).